We begin with the raw amino-acid sequence, 742 residues long: MNEVQLEVAKAYPNDSGRGIARLDPDTLLHLKLSPGDIIEIEGAETTAAKVWRADRQDWNTDTIRIDGFTRQNAEVGIGERVKIRKADAEKADTLVLAPPEEASVQFGSDAAGMVKRQILKRPVVARDIVPVMSSTNHPFMRSPGQAIPLIAVETEPEGVCLVTEDTDVELREEPISGFERTGGGITYEDIGGLENEIQRVREMVELPMKHPQIFQKLGIEPPQGVLLHGPPGTGKTLLAKAVANETSASFFSIAGPEIISKYYGESEQQLREIFEDAKDDSPSIIFIDELDSIAPKREDVTGEVERRVVAQLLTMMDGLEGRGQVIVIAATNRVDAVDPALRRPGRFDREIEIGVPDEIGREEILKIHTRGMPLSDDVNLSTLADDTHGFVGADIESLSKEAAMRALRRYLPEIDLDEEDIPPSLIDRMIVKREDFKGALSEVEPSAMREVLVELPKITWDDVGGLTEAKNNVKESVEWPLNQPEKFTRMGVEPPAGVLLYGPPGTGKTLMAKAVANETNANFISVRGPQLLSKWVGESEKAIRQTFRKARQVAPTVIFFDELDSLAPGRGQTGGNNVSERVVNQLLTELDGLEEMEEVMVIAATNRPDIIDPALIRSGRFDRLVQVGQPGIEGREQILKIHTQDTPLAADVSLRELAERADGYVGSDLANIAREAAIEALRDDEDADDVGMAHFRAAMENVRPTITDDLMEYYDQVEDQFKGSQGPNVNSRQGSEHIGFQ.

Residues 230–237 and 503–510 each bind ATP; these read GPPGTGKT. A disordered region spans residues 722 to 742; the sequence is FKGSQGPNVNSRQGSEHIGFQ. The segment covering 723–734 has biased composition (polar residues); it reads KGSQGPNVNSRQ.

It belongs to the AAA ATPase family. CDC48 subfamily.

Its function is as follows. May be part of a transduction pathway connecting light to cell division. This is Protein CdcH (cdcH) from Halobacterium salinarum (strain ATCC 700922 / JCM 11081 / NRC-1) (Halobacterium halobium).